A 323-amino-acid chain; its full sequence is Serpentine receptor class gamma-5 (323 aa).

The next 7 helical transmembrane spans lie at 31 to 51 (QLFYMVPGIIIHFRILSIMLF), 63 to 83 (FIIFSMDSIASLTQLILDLFI), 98 to 117 (YPLFEHYVLFPNIIFSIYNY), 151 to 171 (IPVTIAFITLSPFLVIWNVII), 193 to 213 (WASLSMFQMIFMAISLTITVF), 245 to 265 (AAFFSAALFQSYFAFFSITAA), and 272 to 292 (FLQGFAFDVLNVGSPIVMVLI).

Belongs to the nematode receptor-like protein srg family.

Its subcellular location is the membrane. The polypeptide is Serpentine receptor class gamma-5 (srg-5) (Caenorhabditis elegans).